Here is a 90-residue protein sequence, read N- to C-terminus: DNA-directed RNA polymerase subunit omega (90 aa).

Residues 69–90 (RQEQQEQEAAELAAVSSIARNR) are disordered.

This sequence belongs to the RNA polymerase subunit omega family. As to quaternary structure, the RNAP catalytic core consists of 2 alpha, 1 beta, 1 beta' and 1 omega subunit. When a sigma factor is associated with the core the holoenzyme is formed, which can initiate transcription.

It catalyses the reaction RNA(n) + a ribonucleoside 5'-triphosphate = RNA(n+1) + diphosphate. Functionally, promotes RNA polymerase assembly. Latches the N- and C-terminal regions of the beta' subunit thereby facilitating its interaction with the beta and alpha subunits. The polypeptide is DNA-directed RNA polymerase subunit omega (Vibrio vulnificus (strain CMCP6)).